Here is a 406-residue protein sequence, read N- to C-terminus: Putative cfxQ-like protein R730 (406 aa).

Residues 1–37 (MKRSHDSITRSINSDNDSETNMNSDNNNNNKPNQRKK) form a disordered region. Positions 13–32 (NSDNDSETNMNSDNNNNNKP) are enriched in low complexity. 173-180 (GPPGVGKS) contributes to the ATP binding site.

It belongs to the CbxX/CfxQ family.

The sequence is that of Putative cfxQ-like protein R730 from Acanthamoeba polyphaga mimivirus (APMV).